Reading from the N-terminus, the 343-residue chain is Heat-inducible transcription repressor HrcA (343 aa).

It belongs to the HrcA family.

In terms of biological role, negative regulator of class I heat shock genes (grpE-dnaK-dnaJ and groELS operons). Prevents heat-shock induction of these operons. This chain is Heat-inducible transcription repressor HrcA, found in Halalkalibacterium halodurans (strain ATCC BAA-125 / DSM 18197 / FERM 7344 / JCM 9153 / C-125) (Bacillus halodurans).